Here is a 98-residue protein sequence, read N- to C-terminus: TACTATQQTAAYKTLVSILSESSFSQCSKDSGYSMLTATALPTNAQYKLMCASTACNTMIKKIVALNPPDCDLTVPTSGLVLDVYTYANGFSSKCASL.

Disulfide bonds link cysteine 3-cysteine 71, cysteine 27-cysteine 56, and cysteine 51-cysteine 95. The Beak-like motif 1 (ligand binding) motif lies at 33-42; sequence YSMLTATALP. The Beak-like motif 2 (ligand binding) motif lies at 72–83; sequence DLTVPTSGLVLD.

It belongs to the elicitin family.

It is found in the secreted. Its function is as follows. Induces local and distal defense responses (incompatible hypersensitive reaction) in plants from the solanaceae and cruciferae families. Elicits leaf necrosis and causes the accumulation of pathogenesis-related proteins. Might interact with the lipidic molecules of the plasma membrane. Elicitins are able to load, carry, and transfer sterols between membranes. The chain is Beta-elicitin cinnamomin from Phytophthora cinnamomi (Cinnamon fungus).